We begin with the raw amino-acid sequence, 63 residues long: Anaphase-promoting complex subunit 13 (63 aa).

The disordered stretch occupies residues 36–63 (KTDDTEETNQETQQADAETWRDLALDTQ). Basic and acidic residues predominate over residues 53–63 (ETWRDLALDTQ).

It belongs to the APC13 family. As to quaternary structure, component of the anaphase promoting complex/cyclosome (APC/C) complex. In terms of tissue distribution, expressed constitutively in roots, leaves, stems, buds, flowers, and seeds.

It localises to the nucleus. The protein operates within protein modification; protein ubiquitination. Component of the anaphase promoting complex/cyclosome (APC/C), a cell cycle-regulated E3 ubiquitin ligase that controls progression through mitosis and the G1 phase of the cell cycle. The APC/C complex acts by mediating ubiquitination and subsequent degradation of target proteins. Regulates global growth and development, including phyllotaxis and apical dominance. Required for pollen maturation. Promotes (pri) miRNA transcription of each MIR159 genes. The protein is Anaphase-promoting complex subunit 13 of Arabidopsis thaliana (Mouse-ear cress).